We begin with the raw amino-acid sequence, 992 residues long: Protein translocase subunit SecA (992 aa).

ATP contacts are provided by residues Gln-86, 104 to 108 (GEGKT), and Asp-535. The disordered stretch occupies residues 885-910 (IAGGSSEVEQTRKPQRRTVQQIGRND). The Zn(2+) site is built by Cys-912, Cys-914, Cys-923, and His-924. The disordered stretch occupies residues 965-992 (IDNGTLPAASPKTPRGRQPQAVPRGKKR).

Belongs to the SecA family. In terms of assembly, monomer and homodimer. Part of the essential Sec protein translocation apparatus which comprises SecA, SecYEG and auxiliary proteins SecDF. Other proteins may also be involved. Zn(2+) serves as cofactor.

It localises to the cell membrane. The protein localises to the cytoplasm. It catalyses the reaction ATP + H2O + cellular proteinSide 1 = ADP + phosphate + cellular proteinSide 2.. Functionally, part of the Sec protein translocase complex. Interacts with the SecYEG preprotein conducting channel. Has a central role in coupling the hydrolysis of ATP to the transfer of proteins into and across the cell membrane, serving as an ATP-driven molecular motor driving the stepwise translocation of polypeptide chains across the membrane. The sequence is that of Protein translocase subunit SecA from Chloroflexus aggregans (strain MD-66 / DSM 9485).